Here is a 337-residue protein sequence, read N- to C-terminus: F420-dependent glucose-6-phosphate dehydrogenase (337 aa).

Residue D40 coordinates coenzyme F420-(gamma-Glu)n. H41 serves as the catalytic Proton donor. Coenzyme F420-(gamma-Glu)n is bound by residues T77 and 108–109 (SG). E110 (proton acceptor) is an active-site residue. Coenzyme F420-(gamma-Glu)n contacts are provided by residues N113, 178 to 179 (GG), and 181 to 182 (VV). Residues T196, K199, K260, and R284 each contribute to the substrate site.

This sequence belongs to the F420-dependent glucose-6-phosphate dehydrogenase family. As to quaternary structure, homodimer.

It carries out the reaction oxidized coenzyme F420-(gamma-L-Glu)(n) + D-glucose 6-phosphate + H(+) = 6-phospho-D-glucono-1,5-lactone + reduced coenzyme F420-(gamma-L-Glu)(n). Its function is as follows. Catalyzes the coenzyme F420-dependent oxidation of glucose 6-phosphate (G6P) to 6-phosphogluconolactone. This chain is F420-dependent glucose-6-phosphate dehydrogenase, found in Rhodococcus erythropolis (strain PR4 / NBRC 100887).